A 320-amino-acid chain; its full sequence is Ribose-phosphate pyrophosphokinase 1 (320 aa).

Residues 39-41 (DGE) and 98-99 (RQ) contribute to the ATP site. 2 residues coordinate Mg(2+): His132 and Asp173. Lys196 is an active-site residue. D-ribose 5-phosphate-binding positions include Arg198, Asp224, and 228-232 (DTAGT).

The protein belongs to the ribose-phosphate pyrophosphokinase family. Class I subfamily. Homohexamer. Mg(2+) serves as cofactor.

The protein localises to the cytoplasm. It catalyses the reaction D-ribose 5-phosphate + ATP = 5-phospho-alpha-D-ribose 1-diphosphate + AMP + H(+). Its pathway is metabolic intermediate biosynthesis; 5-phospho-alpha-D-ribose 1-diphosphate biosynthesis; 5-phospho-alpha-D-ribose 1-diphosphate from D-ribose 5-phosphate (route I): step 1/1. In terms of biological role, involved in the biosynthesis of the central metabolite phospho-alpha-D-ribosyl-1-pyrophosphate (PRPP) via the transfer of pyrophosphoryl group from ATP to 1-hydroxyl of ribose-5-phosphate (Rib-5-P). This Streptococcus pyogenes serotype M1 protein is Ribose-phosphate pyrophosphokinase 1.